The chain runs to 112 residues: Cytochrome c 2.1 (112 aa).

Heme c is bound by residues cysteine 20, cysteine 23, histidine 24, and methionine 85.

It belongs to the cytochrome c family. Binds 1 heme c group covalently per subunit.

The protein resides in the mitochondrion intermembrane space. Its function is as follows. Electron carrier protein. The oxidized form of the cytochrome c heme group can accept an electron from the heme group of the cytochrome c1 subunit of cytochrome reductase. Cytochrome c then transfers this electron to the cytochrome oxidase complex, the final protein carrier in the mitochondrial electron-transport chain. In Caenorhabditis briggsae, this protein is Cytochrome c 2.1.